A 415-amino-acid polypeptide reads, in one-letter code: Adenylosuccinate synthetase (415 aa).

Residues 11-17 (GDEGKGK) and 39-41 (GHT) contribute to the GTP site. Catalysis depends on Asp12, which acts as the Proton acceptor. The Mg(2+) site is built by Asp12 and Gly39. Residues 12-15 (DEGK), 37-40 (NAGH), Thr124, Arg138, Gln218, Thr233, and Arg297 contribute to the IMP site. His40 (proton donor) is an active-site residue. A substrate-binding site is contributed by 293–299 (TTTGRAR). Residues Arg299, 325 to 327 (KLD), and 403 to 405 (STS) contribute to the GTP site.

The protein belongs to the adenylosuccinate synthetase family. Homodimer. Requires Mg(2+) as cofactor.

The protein resides in the cytoplasm. It carries out the reaction IMP + L-aspartate + GTP = N(6)-(1,2-dicarboxyethyl)-AMP + GDP + phosphate + 2 H(+). It participates in purine metabolism; AMP biosynthesis via de novo pathway; AMP from IMP: step 1/2. In terms of biological role, plays an important role in the de novo pathway of purine nucleotide biosynthesis. Catalyzes the first committed step in the biosynthesis of AMP from IMP. The protein is Adenylosuccinate synthetase of Helicobacter hepaticus (strain ATCC 51449 / 3B1).